A 401-amino-acid chain; its full sequence is Beta-ketoadipyl-CoA thiolase (401 aa).

Cys90 functions as the Acyl-thioester intermediate in the catalytic mechanism. Active-site proton acceptor residues include His357 and Cys387.

The protein belongs to the thiolase-like superfamily. Thiolase family.

It carries out the reaction succinyl-CoA + acetyl-CoA = 3-oxoadipyl-CoA + CoA. The protein operates within aromatic compound metabolism; beta-ketoadipate pathway; acetyl-CoA and succinyl-CoA from 3-oxoadipate: step 2/2. Functionally, catalyzes thiolytic cleavage of beta-ketoadipyl-CoA to succinyl-CoA and acetyl-CoA. This Acinetobacter baylyi (strain ATCC 33305 / BD413 / ADP1) protein is Beta-ketoadipyl-CoA thiolase (catF).